A 425-amino-acid polypeptide reads, in one-letter code: 5-methylthioadenosine/S-adenosylhomocysteine deaminase (425 aa).

H63 and H65 together coordinate Zn(2+). Positions 92 and 184 each coordinate substrate. Zn(2+) is bound at residue H211. Positions 214 and 299 each coordinate substrate. D299 serves as a coordination point for Zn(2+).

This sequence belongs to the metallo-dependent hydrolases superfamily. MTA/SAH deaminase family. Zn(2+) is required as a cofactor.

The enzyme catalyses S-adenosyl-L-homocysteine + H2O + H(+) = S-inosyl-L-homocysteine + NH4(+). The catalysed reaction is S-methyl-5'-thioadenosine + H2O + H(+) = S-methyl-5'-thioinosine + NH4(+). Its function is as follows. Catalyzes the deamination of 5-methylthioadenosine and S-adenosyl-L-homocysteine into 5-methylthioinosine and S-inosyl-L-homocysteine, respectively. Is also able to deaminate adenosine. The polypeptide is 5-methylthioadenosine/S-adenosylhomocysteine deaminase (Pyrococcus abyssi (strain GE5 / Orsay)).